The sequence spans 187 residues: Large ribosomal subunit protein uL5 (187 aa).

The protein belongs to the universal ribosomal protein uL5 family. Part of the 50S ribosomal subunit; part of the 5S rRNA/L5/L18/L25 subcomplex. Contacts the 5S rRNA and the P site tRNA. Forms a bridge to the 30S subunit in the 70S ribosome.

In terms of biological role, this is one of the proteins that bind and probably mediate the attachment of the 5S RNA into the large ribosomal subunit, where it forms part of the central protuberance. In the 70S ribosome it contacts protein S13 of the 30S subunit (bridge B1b), connecting the 2 subunits; this bridge is implicated in subunit movement. Contacts the P site tRNA; the 5S rRNA and some of its associated proteins might help stabilize positioning of ribosome-bound tRNAs. This Brachyspira hyodysenteriae (strain ATCC 49526 / WA1) protein is Large ribosomal subunit protein uL5.